A 620-amino-acid polypeptide reads, in one-letter code: Glutathione-regulated potassium-efflux system protein KefC (620 aa).

Helical transmembrane passes span 4 to 24, 26 to 46, 54 to 74, 90 to 110, 114 to 134, 149 to 169, 178 to 198, 218 to 238, 270 to 290, 294 to 314, 327 to 347, and 359 to 379; these read HTLI…PIAV, LGLG…PWGL, SILH…GLEL, GALQ…LLGL, VAEL…MQAM, FAVL…IPLL, MGAF…VVLL, VFSA…EEVG, GLLL…GTLI, LRIV…LWLI, WFAV…GAAQ, and SLTL…VILN. The 120-residue stretch at 399–518 folds into the RCK N-terminal domain; that stretch reads QPRVIIAGFG…AGVEKPERET (120 aa). A disordered region spans residues 597-620; the sequence is GWQGTEEGKHTGNMADEPETKPSS.

Belongs to the monovalent cation:proton antiporter 2 (CPA2) transporter (TC 2.A.37) family. KefC subfamily. In terms of assembly, homodimer. Interacts with the regulatory subunit KefF.

The protein localises to the cell inner membrane. Its function is as follows. Pore-forming subunit of a potassium efflux system that confers protection against electrophiles. Catalyzes K(+)/H(+) antiport. This chain is Glutathione-regulated potassium-efflux system protein KefC, found in Escherichia coli O45:K1 (strain S88 / ExPEC).